The following is a 100-amino-acid chain: ATP synthase subunit c (100 aa).

2 consecutive transmembrane segments (helical) span residues 27–47 (SVIA…IGMG) and 72–92 (FIAL…TLIV).

It belongs to the ATPase C chain family. In terms of assembly, F-type ATPases have 2 components, F(1) - the catalytic core - and F(0) - the membrane proton channel. F(1) has five subunits: alpha(3), beta(3), gamma(1), delta(1), epsilon(1). F(0) has three main subunits: a(1), b(2) and c(10-14). The alpha and beta chains form an alternating ring which encloses part of the gamma chain. F(1) is attached to F(0) by a central stalk formed by the gamma and epsilon chains, while a peripheral stalk is formed by the delta and b chains.

The protein localises to the cell inner membrane. In terms of biological role, f(1)F(0) ATP synthase produces ATP from ADP in the presence of a proton or sodium gradient. F-type ATPases consist of two structural domains, F(1) containing the extramembraneous catalytic core and F(0) containing the membrane proton channel, linked together by a central stalk and a peripheral stalk. During catalysis, ATP synthesis in the catalytic domain of F(1) is coupled via a rotary mechanism of the central stalk subunits to proton translocation. The protein is ATP synthase subunit c of Campylobacter curvus (strain 525.92).